We begin with the raw amino-acid sequence, 388 residues long: L-cysteine desulfidase (388 aa).

The active-site Proton acceptor is the cysteine 25. Residues cysteine 282, cysteine 322, and cysteine 329 each coordinate [4Fe-4S] cluster.

Belongs to the L-cysteine desulfidase family. In terms of assembly, homotrimer. The cofactor is [4Fe-4S] cluster.

It carries out the reaction L-cysteine + H2O = hydrogen sulfide + pyruvate + NH4(+) + H(+). Catalyzes the cleavage of L-cysteine to form 2-aminoprop-2-enoate and sulfide. The former then spontaneously hydrolyzes to pyruvate and NH(3). May be responsible for the production of sulfide required for the biosynthesis of iron-sulfur centers in this archaea. Is very specific for L-cysteine, with no activity being detected with D-cysteine, L-homocysteine, 3-mercaptopropionate (cysteine without the amino group), cysteamine (cysteine without the carboxylate), or mercaptolactate (the hydroxyl analog of cysteine). This is L-cysteine desulfidase from Methanocaldococcus jannaschii (strain ATCC 43067 / DSM 2661 / JAL-1 / JCM 10045 / NBRC 100440) (Methanococcus jannaschii).